Reading from the N-terminus, the 366-residue chain is Gelsolin-like protein 2 (366 aa).

Gelsolin-like repeat units lie at residues 55–139 (NFKV…DLFL), 177–252 (KHIV…HEFY), and 286–327 (KSTV…AQEK). The interval 100–116 (KSTQDEYCVAAYKTVEL) is actin binding. Residues 104-107 (DEYC) form an actin-actin interfilament contact point region.

This sequence belongs to the villin/gelsolin family. Interacts with actin monomers and filaments. Expressed in circular and longitudinal muscle, pseudohearts, pharynx and gizzard. Not expressed in seminal vesicles.

Its subcellular location is the cytoplasm. It is found in the cytoskeleton. Its function is as follows. Calcium-regulated protein that binds to the plus (or barbed) ends of actin monomers or filaments, preventing monomer exchange (end-blocking or capping). Can promote the assembly of monomers into filaments (nucleation) as well as sever existing filaments. The chain is Gelsolin-like protein 2 from Lumbricus terrestris (Common earthworm).